The chain runs to 105 residues: Protein yippee-like At4g27740 (105 aa).

Residues 8–105 form the Yippee domain; that stretch reads PTYFCRNCEN…IEKLKLTKRY (98 aa). Zn(2+) contacts are provided by C12, C15, C68, and C71.

It belongs to the yippee family.

This is Protein yippee-like At4g27740 from Arabidopsis thaliana (Mouse-ear cress).